A 320-amino-acid chain; its full sequence is Methenyltetrahydromethanopterin cyclohydrolase (320 aa).

This sequence belongs to the MCH family. As to quaternary structure, homodimer.

It is found in the cytoplasm. The catalysed reaction is 5,10-methenyl-5,6,7,8-tetrahydromethanopterin + H2O = N(5)-formyl-5,6,7,8-tetrahydromethanopterin + H(+). It participates in one-carbon metabolism; methanogenesis from CO(2); 5,10-methenyl-5,6,7,8-tetrahydromethanopterin from CO(2): step 3/3. In terms of biological role, catalyzes the reversible interconversion of 5-formyl-H(4)MPT to methenyl-H(4)MPT(+). This Methanothermobacter marburgensis (strain ATCC BAA-927 / DSM 2133 / JCM 14651 / NBRC 100331 / OCM 82 / Marburg) (Methanobacterium thermoautotrophicum) protein is Methenyltetrahydromethanopterin cyclohydrolase (mch).